The following is a 988-amino-acid chain: Ephrin type-B receptor 3 (988 aa).

The disordered stretch occupies residues 1 to 24 (GVSSRARRPPGSSRSSRRGVTSEL). The Extracellular portion of the chain corresponds to 1 to 534 (GVSSRARRPP…TSKTFQELPL (534 aa)). The Eph LBD domain occupies 11 to 189 (GSSRSSRRGV…FYKKCSNTIA (179 aa)). C53 and C171 are joined by a disulfide. Fibronectin type-III domains follow at residues 311-424 (VPSA…TNQA) and 425-522 (APSA…TAED). N-linked (GlcNAc...) asparagine glycosylation is found at N323 and N418. The chain crosses the membrane as a helical span at residues 535-555 (IVGSATAGLLFVIVVVIIAIV). The Cytoplasmic portion of the chain corresponds to 556–988 (CFRKGMVTEQ…QMNQTLPVQV (433 aa)). Y604 is subject to Phosphotyrosine; by autocatalysis. Residues 623-886 (VKIEEVIGAG…QIVNTLDKLI (264 aa)) form the Protein kinase domain. ATP is bound by residues 629–637 (IGAGEFGEV) and K655. D748 acts as the Proton acceptor in catalysis. Residues 915 to 979 (TTFTTVGDWL…LSSIQDMRLQ (65 aa)) enclose the SAM domain. Positions 986-988 (VQV) match the PDZ-binding motif.

Belongs to the protein kinase superfamily. Tyr protein kinase family. Ephrin receptor subfamily. Heterotetramer upon binding of the ligand. The heterotetramer is composed of an ephrin dimer and a receptor dimer. Oligomerization is probably required to induce biological responses. Post-translationally, phosphorylated. Autophosphorylates upon ligand-binding. Autophosphorylation on Tyr-604 is required for interaction with SH2 domain-containing proteins. In terms of tissue distribution, present in 10-day embryonic brain and body tissues. Prominent expression in kidney. Lower expression in lung, and barely detectable in brain, liver, heart, skeletal muscle and thymus.

It is found in the cell membrane. It localises to the cell projection. The protein localises to the dendrite. The catalysed reaction is L-tyrosyl-[protein] + ATP = O-phospho-L-tyrosyl-[protein] + ADP + H(+). In terms of biological role, receptor tyrosine kinase which binds promiscuously transmembrane ephrin-B family ligands residing on adjacent cells, leading to contact-dependent bidirectional signaling into neighboring cells. The signaling pathway downstream of the receptor is referred to as forward signaling while the signaling pathway downstream of the ephrin ligand is referred to as reverse signaling. Generally has an overlapping and redundant function with EPHB2. Like EPHB2, functions in axon guidance during development. In addition to its role in axon guidance also plays an important redundant role with other ephrin-B receptors in development and maturation of dendritic spines and the formation of excitatory synapses. May control other aspects of development through regulation of cell migration and positioning. The protein is Ephrin type-B receptor 3 (EPHB3) of Gallus gallus (Chicken).